A 681-amino-acid chain; its full sequence is Ribosomal L1 domain-containing protein CG13096 (681 aa).

Disordered regions lie at residues 1-248 (MVKV…AKSK) and 579-681 (DAAP…DDEE). Ser-15 and Ser-17 each carry phosphoserine. Residues 54 to 74 (VKKDAIKKEPEVSKKGAEKKQ) show a composition bias toward basic and acidic residues. Residue Ser-89 is modified to Phosphoserine. Low complexity predominate over residues 103–112 (KPAASGAPVG). Position 128 is a phosphoserine (Ser-128). Residues 189-217 (QAAPAKPAKAQPASQLQKKAKAVQKLSKP) show a composition bias toward low complexity. Residues 599-610 (KESSSEGAKADA) are compositionally biased toward basic and acidic residues. The span at 611–681 (ESDEEEEVEE…EDDDDDDDEE (71 aa)) shows a compositional bias: acidic residues.

The protein belongs to the universal ribosomal protein uL1 family. Highly divergent.

The protein is Ribosomal L1 domain-containing protein CG13096 of Drosophila melanogaster (Fruit fly).